The chain runs to 462 residues: Argininosuccinate lyase (462 aa).

This sequence belongs to the lyase 1 family. Argininosuccinate lyase subfamily.

The protein resides in the cytoplasm. It carries out the reaction 2-(N(omega)-L-arginino)succinate = fumarate + L-arginine. It participates in amino-acid biosynthesis; L-arginine biosynthesis; L-arginine from L-ornithine and carbamoyl phosphate: step 3/3. This is Argininosuccinate lyase from Bacillus cereus (strain AH820).